The following is an 89-amino-acid chain: Small ribosomal subunit protein uS15 (89 aa).

This sequence belongs to the universal ribosomal protein uS15 family. Part of the 30S ribosomal subunit. Forms a bridge to the 50S subunit in the 70S ribosome, contacting the 23S rRNA.

In terms of biological role, one of the primary rRNA binding proteins, it binds directly to 16S rRNA where it helps nucleate assembly of the platform of the 30S subunit by binding and bridging several RNA helices of the 16S rRNA. Its function is as follows. Forms an intersubunit bridge (bridge B4) with the 23S rRNA of the 50S subunit in the ribosome. This is Small ribosomal subunit protein uS15 from Thermosynechococcus vestitus (strain NIES-2133 / IAM M-273 / BP-1).